We begin with the raw amino-acid sequence, 244 residues long: Ribosomal RNA small subunit methyltransferase NEP1 (244 aa).

The tract at residues 1–34 is disordered; it reads MAAPSDGFKPRERSGGEQAQDWDALPPKRPRLGA. Alanine 2 is subject to N-acetylalanine. Residues serine 5 and serine 14 each carry the phosphoserine modification. Residues threonine 176, glycine 201, glycine 206, and 219 to 224 contribute to the S-adenosyl-L-methionine site; that span reads ISNYPL.

This sequence belongs to the class IV-like SAM-binding methyltransferase superfamily. RNA methyltransferase NEP1 family. As to quaternary structure, homodimer. Part of the small subunit (SSU) processome, composed of more than 70 proteins and the RNA chaperone small nucleolar RNA (snoRNA) U3.

It localises to the nucleus. The protein localises to the nucleolus. It carries out the reaction pseudouridine(1248) in human 18S rRNA + S-adenosyl-L-methionine = N(1)-methylpseudouridine(1248) in human 18S rRNA + S-adenosyl-L-homocysteine + H(+). Its function is as follows. S-adenosyl-L-methionine-dependent pseudouridine N(1)-methyltransferase that methylates pseudouridine at position 1248 (Psi1248) in 18S rRNA. Involved the biosynthesis of the hypermodified N1-methyl-N3-(3-amino-3-carboxypropyl) pseudouridine (m1acp3-Psi) conserved in eukaryotic 18S rRNA. Is not able to methylate uridine at this position. Also has an essential role in 40S ribosomal subunit biogenesis independent on its methyltransferase activity, facilitating the incorporation of ribosomal protein S19 during the formation of pre-ribosomes. Part of the small subunit (SSU) processome, first precursor of the small eukaryotic ribosomal subunit. During the assembly of the SSU processome in the nucleolus, many ribosome biogenesis factors, an RNA chaperone and ribosomal proteins associate with the nascent pre-rRNA and work in concert to generate RNA folding, modifications, rearrangements and cleavage as well as targeted degradation of pre-ribosomal RNA by the RNA exosome. The chain is Ribosomal RNA small subunit methyltransferase NEP1 from Homo sapiens (Human).